A 379-amino-acid polypeptide reads, in one-letter code: UDP-N-acetylglucosamine--N-acetylmuramyl-(pentapeptide) pyrophosphoryl-undecaprenol N-acetylglucosamine transferase (379 aa).

UDP-N-acetyl-alpha-D-glucosamine contacts are provided by residues 17-19 (TGG), asparagine 128, arginine 169, serine 197, and glutamine 298.

The protein belongs to the glycosyltransferase 28 family. MurG subfamily.

It is found in the cell inner membrane. It carries out the reaction di-trans,octa-cis-undecaprenyl diphospho-N-acetyl-alpha-D-muramoyl-L-alanyl-D-glutamyl-meso-2,6-diaminopimeloyl-D-alanyl-D-alanine + UDP-N-acetyl-alpha-D-glucosamine = di-trans,octa-cis-undecaprenyl diphospho-[N-acetyl-alpha-D-glucosaminyl-(1-&gt;4)]-N-acetyl-alpha-D-muramoyl-L-alanyl-D-glutamyl-meso-2,6-diaminopimeloyl-D-alanyl-D-alanine + UDP + H(+). It participates in cell wall biogenesis; peptidoglycan biosynthesis. Cell wall formation. Catalyzes the transfer of a GlcNAc subunit on undecaprenyl-pyrophosphoryl-MurNAc-pentapeptide (lipid intermediate I) to form undecaprenyl-pyrophosphoryl-MurNAc-(pentapeptide)GlcNAc (lipid intermediate II). This Brucella suis biovar 1 (strain 1330) protein is UDP-N-acetylglucosamine--N-acetylmuramyl-(pentapeptide) pyrophosphoryl-undecaprenol N-acetylglucosamine transferase.